The primary structure comprises 283 residues: Large ribosomal subunit protein mL46 (283 aa).

Lysine 217 is modified (N6-succinyllysine). Lysine 228 bears the N6-acetyllysine mark. Residue lysine 246 is modified to N6-succinyllysine.

It belongs to the mitochondrion-specific ribosomal protein mL46 family. As to quaternary structure, component of the mitochondrial ribosome large subunit (39S) which comprises a 16S rRNA and about 50 distinct proteins.

Its subcellular location is the mitochondrion. This chain is Large ribosomal subunit protein mL46 (Mrpl46), found in Mus musculus (Mouse).